A 761-amino-acid chain; its full sequence is RNA-binding protein 12B (761 aa).

3 positions are modified to phosphoserine: Ser98, Ser101, and Ser112. Residue Lys114 forms a Glycyl lysine isopeptide (Lys-Gly) (interchain with G-Cter in SUMO2) linkage. Positions Ser120 to Thr147 are disordered. A Glycyl lysine isopeptide (Lys-Gly) (interchain with G-Cter in SUMO2) cross-link involves residue Lys151. The RRM 1 domain occupies Pro155–Glu230. A compositionally biased stretch (basic and acidic residues) spans Leu247–Arg262. Positions Leu247–Ser278 are disordered. Phosphoserine occurs at positions 250 and 254. Over residues His263 to Ser278 the composition is skewed to basic residues. Thr276 is modified (phosphothreonine). A phosphoserine mark is found at Ser278, Ser280, Ser292, and Ser294. In terms of domain architecture, RRM 2 spans Phe284–Arg360. An N6-acetyllysine modification is found at Lys319. Residue Lys335 forms a Glycyl lysine isopeptide (Lys-Gly) (interchain with G-Cter in SUMO2) linkage. The span at Lys372–Gly384 shows a compositional bias: basic and acidic residues. A disordered region spans residues Lys372–Gln392. Phosphoserine is present on Ser377. Residues Leu400–Glu477 enclose the RRM 3 domain. Residues Lys514 and Lys541 each participate in a glycyl lysine isopeptide (Lys-Gly) (interchain with G-Cter in SUMO2) cross-link. Positions Asp538–Arg621 are enriched in basic and acidic residues. Residues Asp538 to Leu690 are disordered. Phosphoserine is present on residues Ser575 and Ser591. The segment covering Leu627 to Thr654 has biased composition (polar residues). Residues Ser661 to Gly672 are compositionally biased toward low complexity.

This is RNA-binding protein 12B (RBM12B) from Pongo abelii (Sumatran orangutan).